The primary structure comprises 266 residues: 2-C-methyl-D-erythritol 4-phosphate cytidylyltransferase (266 aa).

The segment covering 234–251 (ADDARSAEARSAEARSEE) has biased composition (basic and acidic residues). The interval 234–266 (ADDARSAEARSAEARSEEPQFAGARSTDARSGG) is disordered.

It belongs to the IspD/TarI cytidylyltransferase family. IspD subfamily.

The enzyme catalyses 2-C-methyl-D-erythritol 4-phosphate + CTP + H(+) = 4-CDP-2-C-methyl-D-erythritol + diphosphate. Its pathway is isoprenoid biosynthesis; isopentenyl diphosphate biosynthesis via DXP pathway; isopentenyl diphosphate from 1-deoxy-D-xylulose 5-phosphate: step 2/6. Catalyzes the formation of 4-diphosphocytidyl-2-C-methyl-D-erythritol from CTP and 2-C-methyl-D-erythritol 4-phosphate (MEP). The protein is 2-C-methyl-D-erythritol 4-phosphate cytidylyltransferase of Frankia casuarinae (strain DSM 45818 / CECT 9043 / HFP020203 / CcI3).